We begin with the raw amino-acid sequence, 215 residues long: Urease accessory protein UreG (215 aa).

A GTP-binding site is contributed by 24–31 (GPVGSGKT).

This sequence belongs to the SIMIBI class G3E GTPase family. UreG subfamily. Homodimer. UreD, UreF and UreG form a complex that acts as a GTP-hydrolysis-dependent molecular chaperone, activating the urease apoprotein by helping to assemble the nickel containing metallocenter of UreC. The UreE protein probably delivers the nickel.

The protein resides in the cytoplasm. Facilitates the functional incorporation of the urease nickel metallocenter. This process requires GTP hydrolysis, probably effectuated by UreG. This Burkholderia ambifaria (strain ATCC BAA-244 / DSM 16087 / CCUG 44356 / LMG 19182 / AMMD) (Burkholderia cepacia (strain AMMD)) protein is Urease accessory protein UreG.